We begin with the raw amino-acid sequence, 304 residues long: UDP-N-acetylenolpyruvoylglucosamine reductase (304 aa).

Residues 33–198 (RVGGPVDILL…ITATFCFESG (166 aa)) form the FAD-binding PCMH-type domain. Arg-177 is a catalytic residue. The active-site Proton donor is the Ser-227. Glu-297 is a catalytic residue.

The protein belongs to the MurB family. Requires FAD as cofactor.

Its subcellular location is the cytoplasm. It catalyses the reaction UDP-N-acetyl-alpha-D-muramate + NADP(+) = UDP-N-acetyl-3-O-(1-carboxyvinyl)-alpha-D-glucosamine + NADPH + H(+). Its pathway is cell wall biogenesis; peptidoglycan biosynthesis. In terms of biological role, cell wall formation. This Clostridium botulinum (strain Eklund 17B / Type B) protein is UDP-N-acetylenolpyruvoylglucosamine reductase.